A 112-amino-acid chain; its full sequence is Peptidyl-tRNA hydrolase (112 aa).

It belongs to the PTH2 family.

The protein localises to the cytoplasm. The enzyme catalyses an N-acyl-L-alpha-aminoacyl-tRNA + H2O = an N-acyl-L-amino acid + a tRNA + H(+). In terms of biological role, the natural substrate for this enzyme may be peptidyl-tRNAs which drop off the ribosome during protein synthesis. This is Peptidyl-tRNA hydrolase from Methanothermobacter thermautotrophicus (strain ATCC 29096 / DSM 1053 / JCM 10044 / NBRC 100330 / Delta H) (Methanobacterium thermoautotrophicum).